A 438-amino-acid polypeptide reads, in one-letter code: Probable glucose-6-phosphate isomerase (438 aa).

Glu280 (proton donor) is an active-site residue. Active-site residues include His301 and Lys410.

Belongs to the GPI family.

Its subcellular location is the cytoplasm. The enzyme catalyses alpha-D-glucose 6-phosphate = beta-D-fructose 6-phosphate. Its pathway is carbohydrate biosynthesis; gluconeogenesis. It participates in carbohydrate degradation; glycolysis; D-glyceraldehyde 3-phosphate and glycerone phosphate from D-glucose: step 2/4. Catalyzes the reversible isomerization of glucose-6-phosphate to fructose-6-phosphate. The polypeptide is Probable glucose-6-phosphate isomerase (Methanococcus maripaludis (strain DSM 14266 / JCM 13030 / NBRC 101832 / S2 / LL)).